We begin with the raw amino-acid sequence, 883 residues long: Collagen, type I, alpha 1b (883 aa).

The tract at residues 1–883 (QMSYVDHSKS…LGGSNDVELR (883 aa)) is disordered. The segment covering 13-33 (PPQPGPMGPMGPRGPPGPPGS) has biased composition (pro residues). 3 stretches are compositionally biased toward low complexity: residues 34-57 (SGPQ…AMGS), 113-122 (VPGVMGARGR), and 129-140 (SGARGNDGNTGP). Composition is skewed to gly residues over residues 147–161 (TGGE…GNEG) and 185–194 (GTDGGPGAKG). Low complexity-rich tracts occupy residues 195–205 (SPGAAGLAGAP), 214–223 (AQGAVGAPGP), and 230–248 (PGAS…PGPA). The segment covering 285-297 (GADGGAGGKGAPG) has biased composition (gly residues). Composition is skewed to low complexity over residues 310-326 (ATGE…PGSK) and 390-402 (VGAP…AGPA). Residues 415–424 (GAPGLGGPTG) are compositionally biased toward gly residues. Positions 425 to 444 (ARGAPGPAGNDGAKGEPGAA) are enriched in low complexity. 2 stretches are compositionally biased toward gly residues: residues 445–454 (GAPGGLGAPG) and 478–487 (GGKGGDGAPG). A compositionally biased stretch (low complexity) spans 512 to 542 (AGPTGPRGETGPPGPAGFAGPPGADGQPGAK). The segment covering 564-573 (GPKGGAGPPG) has biased composition (gly residues). 3 stretches are compositionally biased toward low complexity: residues 574-584 (ATGFPGPAGRV), 717-726 (APGAVGPSGK), and 742-756 (SGPA…PAGA). Residues 757–771 (KGDRGEAGEAGDRGH) show a composition bias toward basic and acidic residues. Residues 792–812 (PAGASGPAGPRGPAGSNGAPG) are compositionally biased toward low complexity. The span at 821–836 (AGPPGPPGPAGPPGPP) shows a compositional bias: pro residues.

It belongs to the fibrillar collagen family.

The protein is Collagen, type I, alpha 1b of Epinephelus costae (Goldblotch grouper).